A 115-amino-acid chain; its full sequence is U3-lycotoxin-Ls1r (115 aa).

The N-terminal stretch at 1-20 (MKFVLLFGVLLVTLFSYSSA) is a signal peptide. The propeptide occupies 21-44 (EMLDDFHQADEDELVSLIKKEEAR). Cystine bridges form between C48-C63, C55-C72, C62-C87, and C74-C85.

Belongs to the neurotoxin 19 (CSTX) family. 01 subfamily. As to expression, expressed by the venom gland.

The protein resides in the secreted. The chain is U3-lycotoxin-Ls1r from Lycosa singoriensis (Wolf spider).